The chain runs to 59 residues: Large ribosomal subunit protein bL32 (59 aa).

This sequence belongs to the bacterial ribosomal protein bL32 family.

In Malacoplasma penetrans (strain HF-2) (Mycoplasma penetrans), this protein is Large ribosomal subunit protein bL32.